The chain runs to 372 residues: Probable arabinan endo-1,5-alpha-L-arabinosidase B (372 aa).

A signal peptide spans Met1–Cys16. A compositionally biased stretch (low complexity) spans Ser23–Glu34. The disordered stretch occupies residues Ser23–Ala52. Catalysis depends on Asp59, which acts as the Proton acceptor. A glycan (N-linked (GlcNAc...) asparagine) is linked at Asn120. The active-site Proton donor is the Glu252. N-linked (GlcNAc...) asparagine glycosylation is present at Asn363.

The protein belongs to the glycosyl hydrolase 43 family.

It localises to the secreted. The enzyme catalyses Endohydrolysis of (1-&gt;5)-alpha-arabinofuranosidic linkages in (1-&gt;5)-arabinans.. It functions in the pathway glycan metabolism; L-arabinan degradation. Endo-1,5-alpha-L-arabinanase involved in degradation of pectin. Its preferred substrate is linear 1,5-alpha-L-arabinan. This Aspergillus fumigatus (strain CBS 144.89 / FGSC A1163 / CEA10) (Neosartorya fumigata) protein is Probable arabinan endo-1,5-alpha-L-arabinosidase B (abnB).